Consider the following 602-residue polypeptide: Putative ankyrin repeat protein L100 (602 aa).

ANK repeat units lie at residues 133-162 (VLFY…SLIS), 269-294 (YLEK…KKSI), 295-324 (NKER…NINL), 325-354 (LKGT…DIHI), 355-384 (RDNA…DIHT), 386-414 (SSQA…DIRS), 416-444 (ENIL…DVLS), 445-474 (KGVE…DICA), 476-504 (DNEA…DVKA), 506-534 (DNEA…DITA), and 536-566 (NNEA…DVHA).

The polypeptide is Putative ankyrin repeat protein L100 (Acanthamoeba polyphaga mimivirus (APMV)).